The following is a 493-amino-acid chain: METLLKISGVDKSFPGVKALNNACLSVYAGRVMALMGENGAGKSTLMKVLTGIYSKDAGTIEYLNRSVNFNGPKASQEAGISIIHQELNLVGNLTIAENIFLGREFKTSWGAINWQKMHQEADKLLARLGVTHSSKQLCAELSIGEQQMVEIAKALSFESKVIIMDEPTDALTDTETEALFNVIRELKAENRGIVYISHRLKEIFQICDDVTVLRDGQFIGERIVAEITEDDLIEMMVGRRLDEQYPHLSQEKGECVLDVKNVSGSGIDDVSFKLHAGEIVGVSGLMGAGRTELGKLLYGALPKTAGKVRLKNQEIENLSPQDGLDNGIVYISEDRKGDGLVLGMSVKENMSLTSLDHFSQKGSIRHQAEKMTVDDFILMFNIKTPNRDQQVGLLSGGNQQKVAIARGLMTRPNVLILDEPTRGVDVGAKKEIYQLINEFKKEGLSILMISSDMPEVLGMSDRVLVMREGKISAEFSRKDATQEKLLAAAIGK.

ABC transporter domains are found at residues L5–R241 and E252–I491. G37–S44 is a binding site for ATP.

This sequence belongs to the ABC transporter superfamily. Ribose importer (TC 3.A.1.2.1) family. The complex is composed of an ATP-binding protein (RbsA), two transmembrane proteins (RbsC) and a solute-binding protein (RbsB).

The protein resides in the cell inner membrane. The enzyme catalyses D-ribose(out) + ATP + H2O = D-ribose(in) + ADP + phosphate + H(+). In terms of biological role, part of the ABC transporter complex RbsABC involved in ribose import. Responsible for energy coupling to the transport system. The polypeptide is Ribose import ATP-binding protein RbsA (Haemophilus influenzae (strain 86-028NP)).